We begin with the raw amino-acid sequence, 526 residues long: Glutamyl-tRNA(Gln) amidotransferase subunit A, mitochondrial (526 aa).

Catalysis depends on charge relay system residues lysine 76 and serine 171. The active-site Acyl-ester intermediate is serine 195.

The protein belongs to the amidase family. GatA subfamily. Subunit of the heterotrimeric GatCAB amidotransferase (AdT) complex, composed of A (QRSL1), B (GATB) and C (GATC) subunits.

Its subcellular location is the mitochondrion. It catalyses the reaction L-glutamyl-tRNA(Gln) + L-glutamine + ATP + H2O = L-glutaminyl-tRNA(Gln) + L-glutamate + ADP + phosphate + H(+). In terms of biological role, allows the formation of correctly charged Gln-tRNA(Gln) through the transamidation of misacylated Glu-tRNA(Gln) in the mitochondria. The reaction takes place in the presence of glutamine and ATP through an activated gamma-phospho-Glu-tRNA(Gln). This chain is Glutamyl-tRNA(Gln) amidotransferase subunit A, mitochondrial, found in Canis lupus familiaris (Dog).